The sequence spans 576 residues: Arginine--tRNA ligase (576 aa).

The 'HIGH' region motif lies at 126-136 (ANPTGPMHIGH).

Belongs to the class-I aminoacyl-tRNA synthetase family. As to quaternary structure, monomer.

It is found in the cytoplasm. The catalysed reaction is tRNA(Arg) + L-arginine + ATP = L-arginyl-tRNA(Arg) + AMP + diphosphate. This Rickettsia typhi (strain ATCC VR-144 / Wilmington) protein is Arginine--tRNA ligase.